Consider the following 266-residue polypeptide: MPAPYKDRFAGKKVLVTGASQGIGEATALRFAEEGAQVALNGRKEDKLIAVREKLPKVSGGEHPIATGDISKEDDVKRLVAESIKAMGGLDVLVCNAGYQIPSPSEDIKLEDFEGVMAVNVTGVMLPCREVIRYWLENGIKGTIIVNSSVHQIIPKPHYLGYSASKGAVGNIVRTLALEYATRGIRVNAVAPGAIVTPINMSWIDDPEQYKAVSSHIPMKRPGESREIADAITFLAAEDSTYITGQTLYVDGGLTLYGDFENNWSS.

15 to 39 (LVTGASQGIGEATALRFAEEGAQVA) is a binding site for NADP(+). A substrate-binding site is contributed by S149. Y162 serves as the catalytic Proton acceptor.

The protein belongs to the short-chain dehydrogenases/reductases (SDR) family. Homotetramer or homooctamer.

It catalyses the reaction D-glucose + NADP(+) = D-glucono-1,5-lactone + NADPH + H(+). In terms of biological role, oxidizes both D-glucose and D-mannose, but is 15 times more catalytically efficient with mannose. Strictly dependent on NADP. The polypeptide is Glucose 1-dehydrogenase (Gluconobacter oxydans (strain 621H) (Gluconobacter suboxydans)).